Reading from the N-terminus, the 324-residue chain is Glutathione synthetase (324 aa).

The ATP-grasp domain maps to 129-313 (KLYALHFPDL…LEDEIVDWLV (185 aa)). ATP is bound at residue 155–211 (VDIHGRAVIKPLDGKGGEGIFLLARADRNLNAIIEASTAYGTRHVMVQRYLEESRQG). Mg(2+)-binding residues include E284 and N286.

It belongs to the prokaryotic GSH synthase family. Requires Mg(2+) as cofactor. Mn(2+) serves as cofactor.

The catalysed reaction is gamma-L-glutamyl-L-cysteine + glycine + ATP = glutathione + ADP + phosphate + H(+). The protein operates within sulfur metabolism; glutathione biosynthesis; glutathione from L-cysteine and L-glutamate: step 2/2. In Gloeobacter violaceus (strain ATCC 29082 / PCC 7421), this protein is Glutathione synthetase.